Reading from the N-terminus, the 212-residue chain is Thymidylate kinase (212 aa).

11–18 (GLEGAGKT) contributes to the ATP binding site.

It belongs to the thymidylate kinase family.

The enzyme catalyses dTMP + ATP = dTDP + ADP. In terms of biological role, phosphorylation of dTMP to form dTDP in both de novo and salvage pathways of dTTP synthesis. The sequence is that of Thymidylate kinase (tmk) from Buchnera aphidicola subsp. Acyrthosiphon pisum (strain APS) (Acyrthosiphon pisum symbiotic bacterium).